Consider the following 543-residue polypeptide: CTP synthase (543 aa).

The interval 1-265 is amidoligase domain; that stretch reads MARYIFITGG…DGEVLRHFGL (265 aa). CTP is bound at residue serine 13. A UTP-binding site is contributed by serine 13. 14 to 19 is a binding site for ATP; it reads SLGKGL. Residue tyrosine 54 participates in L-glutamine binding. Aspartate 71 is a binding site for ATP. Mg(2+) contacts are provided by aspartate 71 and glutamate 139. Residues 146-148, 186-191, and lysine 222 contribute to the CTP site; these read DIE and KTKPTQ. Residues 186–191 and lysine 222 contribute to the UTP site; that span reads KTKPTQ. In terms of domain architecture, Glutamine amidotransferase type-1 spans 290–542; that stretch reads TIGVVGKYVG…IAAAVKQARL (253 aa). Glycine 354 provides a ligand contact to L-glutamine. Catalysis depends on cysteine 381, which acts as the Nucleophile; for glutamine hydrolysis. Residues 382–385, glutamate 405, and arginine 470 contribute to the L-glutamine site; that span reads LGMQ. Catalysis depends on residues histidine 515 and glutamate 517.

This sequence belongs to the CTP synthase family. As to quaternary structure, homotetramer.

The catalysed reaction is UTP + L-glutamine + ATP + H2O = CTP + L-glutamate + ADP + phosphate + 2 H(+). It carries out the reaction L-glutamine + H2O = L-glutamate + NH4(+). It catalyses the reaction UTP + NH4(+) + ATP = CTP + ADP + phosphate + 2 H(+). It functions in the pathway pyrimidine metabolism; CTP biosynthesis via de novo pathway; CTP from UDP: step 2/2. Its activity is regulated as follows. Allosterically activated by GTP, when glutamine is the substrate; GTP has no effect on the reaction when ammonia is the substrate. The allosteric effector GTP functions by stabilizing the protein conformation that binds the tetrahedral intermediate(s) formed during glutamine hydrolysis. Inhibited by the product CTP, via allosteric rather than competitive inhibition. Functionally, catalyzes the ATP-dependent amination of UTP to CTP with either L-glutamine or ammonia as the source of nitrogen. Regulates intracellular CTP levels through interactions with the four ribonucleotide triphosphates. In Novosphingobium aromaticivorans (strain ATCC 700278 / DSM 12444 / CCUG 56034 / CIP 105152 / NBRC 16084 / F199), this protein is CTP synthase.